Reading from the N-terminus, the 465-residue chain is UDP-N-acetylmuramate--L-alanine ligase (465 aa).

Residue 115 to 121 (GAHGKTT) participates in ATP binding.

Belongs to the MurCDEF family.

It is found in the cytoplasm. The catalysed reaction is UDP-N-acetyl-alpha-D-muramate + L-alanine + ATP = UDP-N-acetyl-alpha-D-muramoyl-L-alanine + ADP + phosphate + H(+). It participates in cell wall biogenesis; peptidoglycan biosynthesis. Functionally, cell wall formation. The polypeptide is UDP-N-acetylmuramate--L-alanine ligase (Coxiella burnetii (strain CbuK_Q154) (Coxiella burnetii (strain Q154))).